The chain runs to 651 residues: Acetyl-coenzyme A synthetase (651 aa).

Residues 190–193 (RRGK) and threonine 311 contribute to the CoA site. ATP-binding positions include 387–389 (GEP), 411–416 (DTWWQT), aspartate 508, and arginine 523. Serine 531 lines the CoA pocket. Arginine 534 contacts ATP. Valine 545, histidine 547, and valine 550 together coordinate Mg(2+). Residue lysine 617 is modified to N6-acetyllysine.

The protein belongs to the ATP-dependent AMP-binding enzyme family. Mg(2+) serves as cofactor. Post-translationally, acetylated. Deacetylation by the SIR2-homolog deacetylase activates the enzyme.

It carries out the reaction acetate + ATP + CoA = acetyl-CoA + AMP + diphosphate. In terms of biological role, catalyzes the conversion of acetate into acetyl-CoA (AcCoA), an essential intermediate at the junction of anabolic and catabolic pathways. AcsA undergoes a two-step reaction. In the first half reaction, AcsA combines acetate with ATP to form acetyl-adenylate (AcAMP) intermediate. In the second half reaction, it can then transfer the acetyl group from AcAMP to the sulfhydryl group of CoA, forming the product AcCoA. M.tuberculosis may use AcsA for both acetate and propionate assimilation. In Mycobacterium tuberculosis (strain CDC 1551 / Oshkosh), this protein is Acetyl-coenzyme A synthetase.